The sequence spans 256 residues: Probable elongation factor 1-delta (256 aa).

Phosphoserine occurs at positions 37, 53, and 89. The interval asparagine 110–alanine 146 is disordered. Over residues lysine 114–alanine 125 the composition is skewed to basic and acidic residues. Over residues asparagine 126–glycine 144 the composition is skewed to acidic residues. 2 positions are modified to phosphoserine: serine 137 and serine 139.

Belongs to the EF-1-beta/EF-1-delta family. As to quaternary structure, EF-1 is composed of 4 subunits: alpha, beta, delta, and gamma.

In terms of biological role, EF-1-beta and EF-1-delta stimulate the exchange of GDP bound to EF-1-alpha to GTP. The polypeptide is Probable elongation factor 1-delta (eEF1delta) (Drosophila melanogaster (Fruit fly)).